Consider the following 1502-residue polypeptide: Ras guanine nucleotide exchange factor P (1502 aa).

The region spanning 84–187 (FIIDNQVLDW…LLYSLMKFSE (104 aa)) is the Calponin-homology (CH) domain. 4 disordered regions span residues 216–242 (AQSS…SSNE), 325–436 (QQQQ…PNNN), 456–534 (EDNT…VGRG), and 589–935 (TTTA…NQNN). Composition is skewed to low complexity over residues 218–242 (SSSS…SSNE), 325–345 (QQQQ…TTTT), 371–400 (TTSS…LLNH), and 407–421 (SSST…PIST). Residues 287 to 328 (QQQQQQQQQQQQQQQQQQQQQQQQQQQQQQQQQQQQQQQQQQ) are a coiled coil. Positions 422–436 (PSTSKSNSFQKPNNN) are enriched in polar residues. Residues 451-515 (EENEIEDNTN…NQNENEDEVK (65 aa)) are a coiled coil. A compositionally biased stretch (low complexity) spans 458–508 (NTNNNNNNNNNNNNNNNNNNNNNNNNNNNNNNNNTNDNINNNNKNNNNNQN). Positions 518–528 (HSPPKVRPPLP) are enriched in pro residues. 5 stretches are compositionally biased toward low complexity: residues 589–646 (TTTA…NNNN), 663–675 (TIST…TGTI), 686–719 (SQPL…LSLP), 764–790 (NSIN…VSQS), and 813–853 (NSNS…NNNN). The span at 861 to 876 (LTMSNQSANSLKSSGN) shows a compositional bias: polar residues. Residues 883–935 (TNGNNNISQNQNQNQNQNQNQTQNQNQNQNQNHISHSNSISSGNLNNHVNQNN) show a composition bias toward low complexity. The stretch at 1032–1076 (VEENKNLITRTEEMQKMIDSLMKEKKELINEKNTLASMLAKTKQQ) forms a coiled coil. The 148-residue stretch at 1102–1249 (GKYEIKGGTT…SELKLVFSTP (148 aa)) folds into the N-terminal Ras-GEF domain. The 232-residue stretch at 1267–1498 (DPAEIARQLT…FNLSLICEPR (232 aa)) folds into the Ras-GEF domain.

In terms of biological role, promotes the exchange of Ras-bound GDP by GTP. In Dictyostelium discoideum (Social amoeba), this protein is Ras guanine nucleotide exchange factor P (gefP).